A 360-amino-acid polypeptide reads, in one-letter code: 8-hydroxygeraniol dehydrogenase (360 aa).

The Zn(2+) site is built by Cys-50, His-72, Cys-103, Cys-106, Cys-109, Cys-117, and Cys-166.

Belongs to the zinc-containing alcohol dehydrogenase family. Zn(2+) serves as cofactor. As to expression, present in seedlings and vascular tissues (at protein level). Restricted to the epidermis.

It catalyses the reaction (6E)-8-hydroxygeraniol + 2 NADP(+) = (6E)-8-oxogeranial + 2 NADPH + 2 H(+). Dehydrogenase involved in the biosynthesis of oxogeranial from hydroxygeraniol, a precursor of the terpenoid indole alkaloids such as vinblastine and vincristine. The polypeptide is 8-hydroxygeraniol dehydrogenase (10HGO) (Catharanthus roseus (Madagascar periwinkle)).